We begin with the raw amino-acid sequence, 912 residues long: Protein translocase subunit SecA (912 aa).

ATP is bound by residues Gln87, 105 to 109 (GEGKT), and Asp508. Residues 855-912 (QHQDAGGYGADEEVEQMQGGNAPVPVSQVTRDEPKVGRNDPCPCGSGKKYKHCHGQLS) form a disordered region. Positions 896, 898, 907, and 908 each coordinate Zn(2+). Basic residues predominate over residues 902 to 912 (KKYKHCHGQLS).

This sequence belongs to the SecA family. Monomer and homodimer. Part of the essential Sec protein translocation apparatus which comprises SecA, SecYEG and auxiliary proteins SecDF-YajC and YidC. Zn(2+) is required as a cofactor.

It localises to the cell inner membrane. The protein localises to the cytoplasm. The catalysed reaction is ATP + H2O + cellular proteinSide 1 = ADP + phosphate + cellular proteinSide 2.. Functionally, part of the Sec protein translocase complex. Interacts with the SecYEG preprotein conducting channel. Has a central role in coupling the hydrolysis of ATP to the transfer of proteins into and across the cell membrane, serving both as a receptor for the preprotein-SecB complex and as an ATP-driven molecular motor driving the stepwise translocation of polypeptide chains across the membrane. This Xanthomonas campestris pv. campestris (strain B100) protein is Protein translocase subunit SecA.